Consider the following 877-residue polypeptide: Phosphoenolpyruvate carboxylase (877 aa).

Active-site residues include H137 and K542.

The protein belongs to the PEPCase type 1 family. Mg(2+) serves as cofactor.

The catalysed reaction is oxaloacetate + phosphate = phosphoenolpyruvate + hydrogencarbonate. Functionally, forms oxaloacetate, a four-carbon dicarboxylic acid source for the tricarboxylic acid cycle. In Tolumonas auensis (strain DSM 9187 / NBRC 110442 / TA 4), this protein is Phosphoenolpyruvate carboxylase.